We begin with the raw amino-acid sequence, 55 residues long: UPF0391 membrane protein RSp1666 (55 aa).

The next 2 membrane-spanning stretches (helical) occupy residues 5 to 25 (AVIF…GIAA) and 33 to 53 (ILFM…LVAG).

Belongs to the UPF0391 family.

It is found in the cell membrane. The protein is UPF0391 membrane protein RSp1666 of Ralstonia nicotianae (strain ATCC BAA-1114 / GMI1000) (Ralstonia solanacearum).